Consider the following 681-residue polypeptide: DNA ligase (681 aa).

Residues 44–48 (DYIYD), 94–95 (SL), and glutamate 124 contribute to the NAD(+) site. Lysine 126 functions as the N6-AMP-lysine intermediate in the catalytic mechanism. Arginine 147, glutamate 181, lysine 297, and lysine 321 together coordinate NAD(+). Cysteine 415, cysteine 418, cysteine 433, and cysteine 438 together coordinate Zn(2+). The BRCT domain occupies 598-681 (DETSFFYGKK…EAQAKEGTDK (84 aa)).

The protein belongs to the NAD-dependent DNA ligase family. LigA subfamily. Mg(2+) is required as a cofactor. Mn(2+) serves as cofactor.

The catalysed reaction is NAD(+) + (deoxyribonucleotide)n-3'-hydroxyl + 5'-phospho-(deoxyribonucleotide)m = (deoxyribonucleotide)n+m + AMP + beta-nicotinamide D-nucleotide.. Functionally, DNA ligase that catalyzes the formation of phosphodiester linkages between 5'-phosphoryl and 3'-hydroxyl groups in double-stranded DNA using NAD as a coenzyme and as the energy source for the reaction. It is essential for DNA replication and repair of damaged DNA. In Leuconostoc citreum (strain KM20), this protein is DNA ligase.